Here is a 195-residue protein sequence, read N- to C-terminus: tRNA (pseudouridine(54)-N(1))-methyltransferase (195 aa).

An S-adenosyl-L-methionine-binding site is contributed by leucine 129.

Belongs to the methyltransferase superfamily. TrmY family. In terms of assembly, homodimer.

The protein resides in the cytoplasm. The enzyme catalyses pseudouridine(54) in tRNA + S-adenosyl-L-methionine = N(1)-methylpseudouridine(54) in tRNA + S-adenosyl-L-homocysteine + H(+). Functionally, specifically catalyzes the N1-methylation of pseudouridine at position 54 (Psi54) in tRNAs. This Methanocorpusculum labreanum (strain ATCC 43576 / DSM 4855 / Z) protein is tRNA (pseudouridine(54)-N(1))-methyltransferase.